Consider the following 256-residue polypeptide: MSTLDIHQIAVLSDNYIYLVRCRATGACAVIDPSLAEPVLAAAESLGWTITHILNTHHHYDHTGGNEEIKAATGCEIIGFAGDAHRLPGIDRTVVEGDRVAIGQAEARVIETPGHTLGHIAYWFAESSALFCGDTLFSAGCGRLFEGSAGQMWDSLRKLRALPAQTLVFCGHEYTQPNITFALTIDPRNEALRARALEVDALRAAGRPTVPAFLGDEARSNPFLRADSADFQEAFGMTGADPVEVFARTRLKKDHF.

Residues His-57, His-59, Asp-61, His-62, His-115, Asp-134, and His-172 each contribute to the Zn(2+) site.

It belongs to the metallo-beta-lactamase superfamily. Glyoxalase II family. As to quaternary structure, monomer. It depends on Zn(2+) as a cofactor.

It catalyses the reaction an S-(2-hydroxyacyl)glutathione + H2O = a 2-hydroxy carboxylate + glutathione + H(+). It participates in secondary metabolite metabolism; methylglyoxal degradation; (R)-lactate from methylglyoxal: step 2/2. Its function is as follows. Thiolesterase that catalyzes the hydrolysis of S-D-lactoyl-glutathione to form glutathione and D-lactic acid. This Rhodospirillum rubrum (strain ATCC 11170 / ATH 1.1.1 / DSM 467 / LMG 4362 / NCIMB 8255 / S1) protein is Hydroxyacylglutathione hydrolase.